A 556-amino-acid chain; its full sequence is Innexin-7 (556 aa).

The next 3 membrane-spanning stretches (helical) occupy residues L21 to I41, F127 to A147, and A213 to L233. Residue N267 is glycosylated (N-linked (GlcNAc...) asparagine). The helical transmembrane segment at I310–F330 threads the bilayer. A disordered region spans residues D431–W556. Residues V435 to H447 are compositionally biased toward polar residues. Residues R452–V461 show a composition bias toward basic and acidic residues. The span at S463–P474 shows a compositional bias: polar residues. Basic residues predominate over residues K500 to S513. Residues S514 to P527 show a composition bias toward low complexity. Residues H539–W556 show a composition bias toward basic and acidic residues.

This sequence belongs to the pannexin family.

The protein resides in the cell membrane. The protein localises to the cell junction. It localises to the gap junction. Functionally, structural component of the gap junctions. This Caenorhabditis elegans protein is Innexin-7 (inx-7).